We begin with the raw amino-acid sequence, 488 residues long: Neisserial heparin binding antigen (488 aa).

The N-terminal stretch at Met-1 to Ala-17 is a signal peptide. Residue Cys-18 is the site of N-palmitoyl cysteine attachment. A lipid anchor (S-diacylglycerol cysteine) is attached at Cys-18. Residues Gly-21–Asn-201 are disordered. The span at Ser-43–Ala-53 shows a compositional bias: basic and acidic residues. A compositionally biased stretch (low complexity) spans Pro-54–Gln-70. Composition is skewed to polar residues over residues Asp-101–Pro-118 and Met-127–Asn-142. The segment covering Ala-160–Gly-183 has biased composition (low complexity). The Arg-rich motif motif lies at Arg-296–Ser-306. The tract at residues Ser-306–Asp-488 is C1 fragment.

The protein belongs to the NHBA family. The C-terminal beta-barrel forms a monomer. Cleaved in vivo by the Neisserial phase-variable autotransporter/serine protease NalP to give 2 fragments. The N-terminus remains in the cell outer membrane while the 22 kDa C-terminus (beginning on Ser-293) is soluble; this soluble fragment is called C2. Cleaved in vitro by human lactoferrin (LTF, between Arg-305 and Ser-306), this fragment is called C1. Cleavage by NalP or lactoferrin does not alter killing of Neisseria by bactericidal antibodies in vitro. Recombinant and cell surface protein is cleaved by human saliva kallikrein (KLK1) between Ser-303 and Arg-304; in saliva kallikrein is more active on NHBA than lactoferrin. Human plasma kallikrein (KLKB1) cleaves in a similar manner to KLK1.

The protein localises to the cell outer membrane. The protein resides in the cell surface. Its subcellular location is the host mitochondrion. Functionally, a major human immunogenic protein detected in patients recovering from meningitidis, where it induces bactericidal antibodies. Binds heparin and heparan sulfate proteoglycan in vitro via the Arg-rich motif. Heparin-binding to this protein protects bacteria against killing by bactericidal antibodies (serum killing). Binds to human cells via the Arg-rich region; binding may require the intact protein as protein fragments do not bind to human cells. Protein binding to human cells is abolished by treatment with heparinase III but not chondroitinase ABC. The bacteria binds a number of human extracellular sialyated and/or sulfated glycans via this protein, including chondroitin sulfate (KD=5.2 nM), heparin (KD=52 nM) and ganglioside GT3 (KD=210 nM). The recombinant protein binds DNA non-specifically. Plays a role in extracellular-DNA (eDNA) mediated biofilm formation. In strain MC58 eDNA stimulates biofilm formation. When NHBA is not processed by NalP there is an increase in positively charged, NHBA- and IgA-derived DNA-binding peptides on the cell surface, resulting in increased DNA-binding peptides and increased biofilm formation. In terms of biological role, [C2 fragment] Localizes to host mitochondria when applied to the apical side of human endothelial cell layers, where it induces production of reactive oxygen species which lead to increased permeability of host endothelial cells. The C1 fragment (which lacks the first 14 residues of C2) does not have this effect. It is not known if this occurs during Neisseria infections. The polypeptide is Neisserial heparin binding antigen (Neisseria meningitidis serogroup B (strain ATCC BAA-335 / MC58)).